A 545-amino-acid polypeptide reads, in one-letter code: CTP synthase (545 aa).

Positions 1–266 (MTTNYIFVTG…DDYICKRFSL (266 aa)) are amidoligase domain. Serine 14 contacts CTP. Serine 14 contacts UTP. ATP contacts are provided by residues 15 to 20 (SLGKGI) and aspartate 72. Residues aspartate 72 and glutamate 140 each coordinate Mg(2+). Residues 147 to 149 (DIE), 187 to 192 (KTKPTQ), and lysine 223 contribute to the CTP site. Residues 187-192 (KTKPTQ) and lysine 223 each bind UTP. Residue 239 to 241 (KDV) participates in ATP binding. Residues 291–542 (TIGMVGKYIE…VKAASEYQKR (252 aa)) form the Glutamine amidotransferase type-1 domain. Glycine 352 contributes to the L-glutamine binding site. The Nucleophile; for glutamine hydrolysis role is filled by cysteine 379. L-glutamine is bound by residues 380 to 383 (LGMQ), glutamate 403, and arginine 470. Catalysis depends on residues histidine 515 and glutamate 517.

The protein belongs to the CTP synthase family. In terms of assembly, homotetramer.

It carries out the reaction UTP + L-glutamine + ATP + H2O = CTP + L-glutamate + ADP + phosphate + 2 H(+). The enzyme catalyses L-glutamine + H2O = L-glutamate + NH4(+). The catalysed reaction is UTP + NH4(+) + ATP = CTP + ADP + phosphate + 2 H(+). It functions in the pathway pyrimidine metabolism; CTP biosynthesis via de novo pathway; CTP from UDP: step 2/2. Allosterically activated by GTP, when glutamine is the substrate; GTP has no effect on the reaction when ammonia is the substrate. The allosteric effector GTP functions by stabilizing the protein conformation that binds the tetrahedral intermediate(s) formed during glutamine hydrolysis. Inhibited by the product CTP, via allosteric rather than competitive inhibition. Its function is as follows. Catalyzes the ATP-dependent amination of UTP to CTP with either L-glutamine or ammonia as the source of nitrogen. Regulates intracellular CTP levels through interactions with the four ribonucleotide triphosphates. The polypeptide is CTP synthase (Citrobacter koseri (strain ATCC BAA-895 / CDC 4225-83 / SGSC4696)).